A 133-amino-acid polypeptide reads, in one-letter code: Succinate dehydrogenase assembly factor 3, mitochondrial (133 aa).

Residues 1–12 (MNNKLIYRSVRF) constitute a mitochondrion transit peptide.

This sequence belongs to the complex I LYR family. SDHAF3 subfamily. In terms of assembly, interacts with SDH2 within an SDH1-SDH2 subcomplex.

It localises to the mitochondrion. It is found in the mitochondrion intermembrane space. Its subcellular location is the mitochondrion matrix. Functionally, plays an essential role in the assembly of succinate dehydrogenase (SDH), an enzyme complex (also referred to as respiratory complex II) that is a component of both the tricarboxylic acid (TCA) cycle and the mitochondrial electron transport chain, and which couples the oxidation of succinate to fumarate with the reduction of ubiquinone (coenzyme Q) to ubiquinol. Promotes maturation of the iron-sulfur protein subunit SDH2 of the SDH catalytic dimer, protecting it from the deleterious effects of oxidants. Acts together with SDHAF1 (SDH6). In Saccharomyces cerevisiae (strain ATCC 204508 / S288c) (Baker's yeast), this protein is Succinate dehydrogenase assembly factor 3, mitochondrial.